Consider the following 234-residue polypeptide: Chalcone--flavanone isomerase 2 (234 aa).

Residues Thr-50, Asn-115, and Ser-192 each coordinate substrate.

This sequence belongs to the chalcone isomerase family.

It catalyses the reaction a chalcone = a flavanone.. It participates in secondary metabolite biosynthesis; flavonoid biosynthesis. In terms of biological role, catalyzes the intramolecular cyclization of bicyclic chalcones into tricyclic (S)-flavanones. Responsible for the isomerization of 4,2',4',6'-tetrahydroxychalcone (also termed chalcone) into naringenin. The sequence is that of Chalcone--flavanone isomerase 2 (CHI2) from Vitis vinifera (Grape).